Here is a 691-residue protein sequence, read N- to C-terminus: Pentatricopeptide repeat-containing protein At4g37170 (691 aa).

PPR repeat units lie at residues 84-118 (PASTYCNLIQVCSQTRALEEGKKVHEHIRTSGFVP), 119-149 (GIVIWNRLLRMYAKCGSLVDARKVFDEMPNR), 150-184 (DLCSWNVMVNGYAEVGLLEEARKLFDEMTEKDSYS), 185-211 (WTAMVTGYVKKDQPEEALVLYSLMQRV), 217-251 (NIFTVSIAVAAAAAVKCIRRGKEIHGHIVRAGLDS), 252-286 (DEVLWSSLMDMYGKCGCIDEARNIFDKIVEKDVVS), 287-317 (WTSMIDRYFKSSRWREGFSLFSELVGSCERP), 318-352 (NEYTFAGVLNACADLTTEELGKQVHGYMTRVGFDP), 353-383 (YSFASSSLVDMYTKCGNIESAKHVVDGCPKP), 384-418 (DLVSWTSLIGGCAQNGQPDEALKYFDLLLKSGTKP), 419-449 (DHVTFVNVLSACTHAGLVEKGLEFFYSITEK), and 455-485 (TSDHYTCLVDLLARSGRFEQLKSVISEMPMK). The tract at residues 490–565 (LWASVLGGCS…RPGSSWTEIK (76 aa)) is type E motif. The segment at 566–596 (RKRHVFIAADTSHPMYNQIVEFLRELRKKMK) is type E(+) motif. Residues 597 to 691 (EEGYVPATSL…NGQCSCGDYW (95 aa)) form a type DYW motif region.

This sequence belongs to the PPR family. PCMP-H subfamily.

The protein is Pentatricopeptide repeat-containing protein At4g37170 (PCMP-H5) of Arabidopsis thaliana (Mouse-ear cress).